A 345-amino-acid chain; its full sequence is GTPase Obg (345 aa).

The 159-residue stretch at 1 to 159 (MRFIDEASIT…FHLKLELKLL (159 aa)) folds into the Obg domain. Positions 160–329 (ADVGIVGLPN…LIQILARQIA (170 aa)) constitute an OBG-type G domain. GTP-binding positions include 166-173 (GLPNAGKS), 191-195 (FTTLT), 213-216 (DIPG), 283-286 (NKID), and 310-312 (SAA). Ser-173 and Thr-193 together coordinate Mg(2+).

It belongs to the TRAFAC class OBG-HflX-like GTPase superfamily. OBG GTPase family. In terms of assembly, monomer. The cofactor is Mg(2+).

It is found in the cytoplasm. Its function is as follows. An essential GTPase which binds GTP, GDP and possibly (p)ppGpp with moderate affinity, with high nucleotide exchange rates and a fairly low GTP hydrolysis rate. Plays a role in control of the cell cycle, stress response, ribosome biogenesis and in those bacteria that undergo differentiation, in morphogenesis control. The chain is GTPase Obg from Desulforapulum autotrophicum (strain ATCC 43914 / DSM 3382 / VKM B-1955 / HRM2) (Desulfobacterium autotrophicum).